Here is a 616-residue protein sequence, read N- to C-terminus: Elongation factor 4 (616 aa).

The region spanning Glu17–Val203 is the tr-type G domain. GTP-binding positions include Asp29–Thr34 and Asn150–Asp153.

This sequence belongs to the TRAFAC class translation factor GTPase superfamily. Classic translation factor GTPase family. LepA subfamily.

The protein localises to the cell membrane. It carries out the reaction GTP + H2O = GDP + phosphate + H(+). Functionally, required for accurate and efficient protein synthesis under certain stress conditions. May act as a fidelity factor of the translation reaction, by catalyzing a one-codon backward translocation of tRNAs on improperly translocated ribosomes. Back-translocation proceeds from a post-translocation (POST) complex to a pre-translocation (PRE) complex, thus giving elongation factor G a second chance to translocate the tRNAs correctly. Binds to ribosomes in a GTP-dependent manner. This is Elongation factor 4 from Corynebacterium jeikeium (strain K411).